Consider the following 274-residue polypeptide: 2,3,4,5-tetrahydropyridine-2,6-dicarboxylate N-succinyltransferase (274 aa).

Arginine 106 and aspartate 143 together coordinate substrate.

Belongs to the transferase hexapeptide repeat family. As to quaternary structure, homotrimer.

Its subcellular location is the cytoplasm. It carries out the reaction (S)-2,3,4,5-tetrahydrodipicolinate + succinyl-CoA + H2O = (S)-2-succinylamino-6-oxoheptanedioate + CoA. It functions in the pathway amino-acid biosynthesis; L-lysine biosynthesis via DAP pathway; LL-2,6-diaminopimelate from (S)-tetrahydrodipicolinate (succinylase route): step 1/3. The chain is 2,3,4,5-tetrahydropyridine-2,6-dicarboxylate N-succinyltransferase from Rickettsia akari (strain Hartford).